We begin with the raw amino-acid sequence, 201 residues long: Lipopolysaccharide core heptose(II)-phosphate phosphatase (201 aa).

Positions 1 to 35 are cleaved as a signal peptide; the sequence is MLAFTLRFIKNKRYLATLAGALVIIAGLTSQHAWS.

It belongs to the phosphoglycerate mutase family. Ais subfamily.

The protein localises to the periplasm. It participates in bacterial outer membrane biogenesis; lipopolysaccharide metabolism. Functionally, catalyzes the dephosphorylation of heptose(II) of the outer membrane lipopolysaccharide core. The protein is Lipopolysaccharide core heptose(II)-phosphate phosphatase of Salmonella paratyphi A (strain AKU_12601).